We begin with the raw amino-acid sequence, 510 residues long: MTTSIIERIDAWAEKTPDFPCYEYAGTRLSYKELKRQSDALGSYLLKNLKTDKEKPIIVYGHMSPLMIIAFLGAIKSGRAYVPVDFSMPVERIEQIKKAADPALFICTEELPENLTITDCPVLNAENLVDALEKHFDEKPDPTSCVKNDDNYYIIYTSGSTGNPKGVQISQNNLVSFSNWILQDFSLQQGLRFLNQAPFSFDLSVMDLYPCLLSGGTLVPMDKTITSNLKDLYHEIPAQSFDVWVSTPSFADLCLLDPNFNQENNPNLTRFLFCGEVLAKKTARELLVRFPDAVIYNTYGPTEATVAVTQVRITAELIDAYPSLPLGVIKPDMRLHIIDQETGDVLPDGEKGEIVLIGASVSKGYLNEPEKTDQVFFDYKGYQAYHTGDSGIIKDGYLFFQGRLDFQIKLHGYRIELEDIENNLKKVSLIQNCAIIPKMKDGKVDMLVAQVIPSPNDFTKEYQLSAAIKNELKEFMPTYMIPRKWIYKTEFPLTMNGKIDRKALNQEVNK.

An ATP-binding site is contributed by 157-158 (TS). Residue aspartate 202 participates in D-alanine binding. 297–302 (NTYGPT) contacts ATP. Valine 306 is a binding site for D-alanine. ATP is bound by residues aspartate 389 and lysine 498. Residue lysine 498 participates in D-alanine binding.

The protein belongs to the ATP-dependent AMP-binding enzyme family. DltA subfamily.

The protein localises to the cytoplasm. The enzyme catalyses holo-[D-alanyl-carrier protein] + D-alanine + ATP = D-alanyl-[D-alanyl-carrier protein] + AMP + diphosphate. The protein operates within cell wall biogenesis; lipoteichoic acid biosynthesis. Its function is as follows. Catalyzes the first step in the D-alanylation of lipoteichoic acid (LTA), the activation of D-alanine and its transfer onto the D-alanyl carrier protein (Dcp) DltC. In an ATP-dependent two-step reaction, forms a high energy D-alanyl-AMP intermediate, followed by transfer of the D-alanyl residue as a thiol ester to the phosphopantheinyl prosthetic group of the Dcp. D-alanylation of LTA plays an important role in modulating the properties of the cell wall in Gram-positive bacteria, influencing the net charge of the cell wall. This Listeria welshimeri serovar 6b (strain ATCC 35897 / DSM 20650 / CCUG 15529 / CIP 8149 / NCTC 11857 / SLCC 5334 / V8) protein is D-alanine--D-alanyl carrier protein ligase.